A 439-amino-acid chain; its full sequence is MFLHGTSRQNQHGHLEIGGVDALYLAEKYGTPLYVYDVALIRERAKSFKQAFISAGLKAQVAYASKAFSSVAMIQLAEEEGLSLDVVSGGELYTAVAAGFPAERIHFHGNNKSREELRMALEHRIGCIVVDNFYEIALLEDLCKETGHSIDVLLRITPGVEAHTHDYITTGQEDSKFGFDLHNGQTERAIEQVLQSEHIQLLGVHCHIGSQIFDTAGFVLAAEKIFKKLDEWRDSYSFVSKVLNLGGGFGIRYTEDDEPLHATEYVEKIIEAVKENASRYGFDIPEIWIEPGRSLVGDAGTTLYTVGSQKEVPGVRQYVAVDGGMNDNIRPALYQAKYEAAAANRIGEAHDKTVSIAGKCCESGDMLIWDIDLPEVKEGDLLAVFCTGAYGYSMANNYNRIPRPAVVFVENGEAHLVVKRETYEDIVKLDLPFKTGVKQ.

N6-(pyridoxal phosphate)lysine is present on Lys-66. Residues Gly-248 and 290-293 contribute to the pyridoxal 5'-phosphate site; that span reads EPGR. 3 residues coordinate substrate: Arg-293, Arg-330, and Tyr-334. Residue Cys-361 is the Proton donor of the active site. Substrate is bound by residues Glu-362 and Tyr-390. Residue Tyr-390 participates in pyridoxal 5'-phosphate binding.

The protein belongs to the Orn/Lys/Arg decarboxylase class-II family. LysA subfamily. Homodimer. Pyridoxal 5'-phosphate serves as cofactor.

The catalysed reaction is meso-2,6-diaminopimelate + H(+) = L-lysine + CO2. The protein operates within amino-acid biosynthesis; L-lysine biosynthesis via DAP pathway; L-lysine from DL-2,6-diaminopimelate: step 1/1. Functionally, specifically catalyzes the decarboxylation of meso-diaminopimelate (meso-DAP) to L-lysine. In Bacillus subtilis (strain 168), this protein is Diaminopimelate decarboxylase.